The chain runs to 400 residues: Acetylornithine aminotransferase (400 aa).

Pyridoxal 5'-phosphate-binding positions include 106–107 and F132; that span reads GA. Residue R135 coordinates N(2)-acetyl-L-ornithine. A pyridoxal 5'-phosphate-binding site is contributed by 217 to 220; sequence DEVQ. K246 carries the N6-(pyridoxal phosphate)lysine modification. S274 provides a ligand contact to N(2)-acetyl-L-ornithine. Pyridoxal 5'-phosphate is bound at residue T275.

The protein belongs to the class-III pyridoxal-phosphate-dependent aminotransferase family. ArgD subfamily. Homodimer. Pyridoxal 5'-phosphate serves as cofactor.

The protein resides in the cytoplasm. It carries out the reaction N(2)-acetyl-L-ornithine + 2-oxoglutarate = N-acetyl-L-glutamate 5-semialdehyde + L-glutamate. It participates in amino-acid biosynthesis; L-arginine biosynthesis; N(2)-acetyl-L-ornithine from L-glutamate: step 4/4. The polypeptide is Acetylornithine aminotransferase (Streptomyces clavuligerus).